The following is a 295-amino-acid chain: Elongation factor Ts (295 aa).

The segment at Thr-79–Val-82 is involved in Mg(2+) ion dislocation from EF-Tu.

The protein belongs to the EF-Ts family.

Its subcellular location is the cytoplasm. In terms of biological role, associates with the EF-Tu.GDP complex and induces the exchange of GDP to GTP. It remains bound to the aminoacyl-tRNA.EF-Tu.GTP complex up to the GTP hydrolysis stage on the ribosome. This Bacillus mycoides (strain KBAB4) (Bacillus weihenstephanensis) protein is Elongation factor Ts.